Consider the following 1003-residue polypeptide: PHD finger protein 12 (1003 aa).

Residues 29–59 (APPKTDEAEKRSRKPEKESRRSGRATNHDSC) form a disordered region. Basic and acidic residues predominate over residues 32-59 (KTDEAEKRSRKPEKESRRSGRATNHDSC). The PHD-type 1 zinc finger occupies 56–105 (HDSCDSCKEGGDLLCCDHCPAAFHLQCCNPPLSEEMLPPGEWMCHRCTVR). Zn(2+) is bound by residues cysteine 59, serine 61, cysteine 62, histidine 79, and cysteine 82. Disordered stretches follow at residues 110 to 183 (EQKK…HNDV) and 234 to 255 (TTALPGSSKRRRKEETTGKNVK). Residues serine 131 and serine 134 each carry the phosphoserine modification. Positions 138–161 (LLDRPASKTELKAIAHARILERRA) are enriched in basic and acidic residues. Over residues 165-178 (GTPTSNASTETPTS) the composition is skewed to polar residues. The SIN3 interacting domain 1 stretch occupies residues 202–241 (VQPQLRRPFELLIAAAMERNPTQFQLPNELTCTTALPGSS). The PHD-type 2; atypical zinc finger occupies 271 to 321 (VKVCFTCNRSCRVAPLIQCDYCPLLFHMDCLEPPLTAMPLGRWMCPNHIEH). 8 residues coordinate Zn(2+): cysteine 274, cysteine 277, cysteine 289, cysteine 292, histidine 297, cysteine 300, cysteine 315, and histidine 318. Positions 328 to 364 (NLTLSNRCQVFDRFQDTISQHVVKVDFLNRIHKKHPP) are SIN3 interacting domain 2. Residue lysine 467 forms a Glycyl lysine isopeptide (Lys-Gly) (interchain with G-Cter in SUMO2) linkage. Disordered stretches follow at residues 531–583 (KAPC…GWPR) and 641–671 (HRKTVQSQIGPSSTESRPLGSPPNATRVLTP). At serine 555 the chain carries Phosphoserine. Threonine 557 and threonine 570 each carry phosphothreonine. A compositionally biased stretch (polar residues) spans 641-656 (HRKTVQSQIGPSSTES). Threonine 670 is modified (phosphothreonine). The 55-residue stretch at 814–868 (LYIGTGADMDVCLTNYGHCNYVSGKHACIFYDENTKHYELLNYSEHGTTVDNVLY) folds into the FHA domain. The interval 894-922 (RRRHQKQDEEPSEEAAMMSSQAQGPQRRP) is disordered. Residue lysine 899 forms a Glycyl lysine isopeptide (Lys-Gly) (interchain with G-Cter in SUMO2) linkage. Residues 907–916 (EAAMMSSQAQ) are compositionally biased toward low complexity. Residues lysine 972, lysine 986, and lysine 990 each participate in a glycyl lysine isopeptide (Lys-Gly) (interchain with G-Cter in SUMO2) cross-link.

Component of SIN3 complexes. Interacts with SIN3A in a complex composed of HDAC1, SAP30 and SIN3A. Component of the SIN3B complex, which includes SIN3B, HDAC2 or HDAC1, PHF12 and MORF4L1; interacts directly with all subunits. Interacts with TLE5. As to expression, expressed mainly in heart, brain, lung, liver and testis.

The protein localises to the nucleus. Transcriptional repressor acting as key scaffolding subunit of SIN3 complexes which contributes to complex assembly by contacting each core subunit domain, stabilizes the complex and constitutes the substrate receptor by recruiting the H3 histone tail. SIN3 complexes are composed of a SIN3 scaffold subunit, one catalytic core (HDAC1 or HDAC2) and 2 chromatin targeting modules. SIN3B complex represses transcription and counteracts the histone acetyltransferase activity of EP300 through the recognition H3K27ac marks by PHF12 and the activity of the histone deacetylase HDAC2. SIN3B complex is recruited downstream of the constitutively active genes transcriptional start sites through interaction with histones and mitigates histone acetylation and RNA polymerase II progression within transcribed regions contributing to the regulation of transcription. May also repress transcription in a SIN3A-independent manner through recruitment of functional TLE5 complexes to DNA. May also play a role in ribosomal biogenesis. This is PHD finger protein 12 from Mus musculus (Mouse).